The primary structure comprises 202 residues: Heart- and neural crest derivatives-expressed protein 1 (202 aa).

A bHLH domain is found at 83 to 135 (RKGVGGPKKERRRTESINSAFAELRECIPNVPADTKLSKIKTLRLATSYIAYL). The disordered stretch occupies residues 143–187 (SQPGEPEGFKAELKKADGRENKRKRETQPEVYSQPLAHGEKKLKG). Positions 149–162 (EGFKAELKKADGRE) are enriched in basic and acidic residues.

Efficient DNA binding requires dimerization with another bHLH protein.

It localises to the nucleus. The protein resides in the nucleoplasm. The protein localises to the nucleolus. In terms of biological role, transcription factor. Plays an essential role in cardiac morphogenesis. This is Heart- and neural crest derivatives-expressed protein 1 (HAND1) from Gallus gallus (Chicken).